A 428-amino-acid chain; its full sequence is Histidine--tRNA ligase (428 aa).

This sequence belongs to the class-II aminoacyl-tRNA synthetase family. In terms of assembly, homodimer.

The protein resides in the cytoplasm. The catalysed reaction is tRNA(His) + L-histidine + ATP = L-histidyl-tRNA(His) + AMP + diphosphate + H(+). The sequence is that of Histidine--tRNA ligase from Halalkalibacterium halodurans (strain ATCC BAA-125 / DSM 18197 / FERM 7344 / JCM 9153 / C-125) (Bacillus halodurans).